Reading from the N-terminus, the 98-residue chain is NADH-ubiquinone oxidoreductase chain 4L (98 aa).

Transmembrane regions (helical) follow at residues 1-21 (MSMVYMNIMLAFTMSLIGLLM), 29-49 (SLLCLEGMMLSLFVMASLMIL), and 61-81 (IILLVFAACEAALGLALLVMI).

The protein belongs to the complex I subunit 4L family. In terms of assembly, core subunit of respiratory chain NADH dehydrogenase (Complex I) which is composed of 45 different subunits.

The protein resides in the mitochondrion inner membrane. It catalyses the reaction a ubiquinone + NADH + 5 H(+)(in) = a ubiquinol + NAD(+) + 4 H(+)(out). Functionally, core subunit of the mitochondrial membrane respiratory chain NADH dehydrogenase (Complex I) which catalyzes electron transfer from NADH through the respiratory chain, using ubiquinone as an electron acceptor. Part of the enzyme membrane arm which is embedded in the lipid bilayer and involved in proton translocation. The chain is NADH-ubiquinone oxidoreductase chain 4L (MT-ND4L) from Vicugna pacos (Alpaca).